A 1409-amino-acid polypeptide reads, in one-letter code: DNA-directed RNA polymerase subunit beta' (1409 aa).

Zn(2+) is bound by residues cysteine 69, cysteine 71, cysteine 84, and cysteine 87. Mg(2+) is bound by residues aspartate 461, aspartate 463, and aspartate 465. Zn(2+)-binding residues include cysteine 805, cysteine 879, cysteine 886, and cysteine 889.

The protein belongs to the RNA polymerase beta' chain family. The RNAP catalytic core consists of 2 alpha, 1 beta, 1 beta' and 1 omega subunit. When a sigma factor is associated with the core the holoenzyme is formed, which can initiate transcription. The cofactor is Mg(2+). Requires Zn(2+) as cofactor.

It catalyses the reaction RNA(n) + a ribonucleoside 5'-triphosphate = RNA(n+1) + diphosphate. Its function is as follows. DNA-dependent RNA polymerase catalyzes the transcription of DNA into RNA using the four ribonucleoside triphosphates as substrates. In Anaplasma phagocytophilum (strain HZ), this protein is DNA-directed RNA polymerase subunit beta'.